A 572-amino-acid polypeptide reads, in one-letter code: Formate--tetrahydrofolate ligase (572 aa).

An ATP-binding site is contributed by 65–72; sequence TPLGEGKT.

Belongs to the formate--tetrahydrofolate ligase family.

It carries out the reaction (6S)-5,6,7,8-tetrahydrofolate + formate + ATP = (6R)-10-formyltetrahydrofolate + ADP + phosphate. It functions in the pathway one-carbon metabolism; tetrahydrofolate interconversion. This chain is Formate--tetrahydrofolate ligase, found in Chloroflexus aggregans (strain MD-66 / DSM 9485).